The primary structure comprises 746 residues: Steroid receptor seven-up, isoform A (746 aa).

Residues 38–191 (PPHSAWHEPP…HSQSSNSGSQ (154 aa)) are disordered. Over residues 56-68 (AASAGPGTTTGSV) the composition is skewed to low complexity. The segment covering 83–101 (QQSAVIKQDLSCPSLNQAG) has biased composition (polar residues). Gly residues predominate over residues 122–141 (GSAGGHHSGSGSGSGSGVNP). Residues 158–170 (MLTSIKGQPTGCG) show a composition bias toward polar residues. The span at 171–191 (STTPSSQANSSHSQSSNSGSQ) shows a compositional bias: low complexity. Residues 197–272 (NIECVVCGDK…MGMRREAVQR (76 aa)) constitute a DNA-binding region (nuclear receptor). NR C4-type zinc fingers lie at residues 200–220 (CVVC…CEGC) and 236–260 (CRGS…LKKC). The region spanning 307-556 (YLSSYISLLL…PLVPSAGSAF (250 aa)) is the NR LBD domain. The tract at residues 579-645 (QATPPSSGGG…APAPVPTSSV (67 aa)) is disordered. The span at 592-605 (GHNNSSGLGASLPT) shows a compositional bias: polar residues. Low complexity predominate over residues 606–645 (QSQSGSSSRNLTASPLSTSLATAPAPASASAPAPVPTSSV).

Belongs to the nuclear hormone receptor family. NR2 subfamily. In terms of tissue distribution, expressed in several embryonic tissues; dorsal vessel, oenocyte and fat body. CNS expression is dynamic and confined to temporally restricted subsections of the NB lineage; expressed in many NB and GMCs, but only a small number of neurons.

The protein resides in the nucleus. Receptor that is required in photoreceptors R1, R3, R4 and R6 during eye development; generation of the ganglion mother cell-2 (GMC-2) fate in the nb7-3 lineage, coinciding with the transition in the expression of HB to KR in the neuroblasts (NBs). This Drosophila melanogaster (Fruit fly) protein is Steroid receptor seven-up, isoform A (svp).